The sequence spans 305 residues: Superkiller complex protein 8 (305 aa).

Residue Met1 is modified to N-acetylmethionine. At Thr2 the chain carries N-acetylthreonine; in WD repeat-containing protein 61, N-terminally processed. WD repeat units lie at residues 14–57, 62–101, 104–143, 146–187, 188–227, 230–269, and 272–305; these read AHDD…LELQ, GHQL…QMKS, AGPV…KEYS, TRGK…HTLE, GHAM…LAGT, GHAS…CIHT, and DHQD…DCPI.

This sequence belongs to the SKI8 family. In terms of assembly, component of the PAF1 complex, which consists of CDC73, PAF1, LEO1, CTR9, RTF1 and SKIC8. The PAF1 complex interacts with PHF5A. Within the PAF1 complex interacts directly with PHF5A. Component of the SKI complex which consists of SKIC2, SKIC3 and SKIC8.

It is found in the nucleus. The protein resides in the cytoplasm. In terms of biological role, component of the PAF1 complex (PAF1C) which has multiple functions during transcription by RNA polymerase II and is implicated in regulation of development and maintenance of embryonic stem cell pluripotency. PAF1C associates with RNA polymerase II through interaction with POLR2A CTD non-phosphorylated and 'Ser-2'- and 'Ser-5'-phosphorylated forms and is involved in transcriptional elongation, acting both independently and synergistically with TCEA1 and in cooperation with the DSIF complex and HTATSF1. PAF1C is required for transcription of Hox and Wnt target genes. PAF1C is involved in hematopoiesis and stimulates transcriptional activity of KMT2A/MLL1; it promotes leukemogenesis through association with KMT2A/MLL1-rearranged oncoproteins, such as KMT2A/MLL1-MLLT3/AF9 and KMT2A/MLL1-MLLT1/ENL. PAF1C is involved in histone modifications such as ubiquitination of histone H2B and methylation on histone H3 'Lys-4' (H3K4me3). PAF1C recruits the RNF20/40 E3 ubiquitin-protein ligase complex and the E2 enzyme UBE2A or UBE2B to chromatin which mediate monoubiquitination of 'Lys-120' of histone H2B (H2BK120ub1); UB2A/B-mediated H2B ubiquitination is proposed to be coupled to transcription. PAF1C is involved in mRNA 3' end formation probably through association with cleavage and poly(A) factors. In case of infection by influenza A strain H3N2, PAF1C associates with viral NS1 protein, thereby regulating gene transcription. Required for mono- and trimethylation on histone H3 'Lys-4' (H3K4me3), dimethylation on histone H3 'Lys-79' (H3K4me3). Required for Hox gene transcription. Also acts as a component of the SKI complex, a multiprotein complex that assists the RNA-degrading exosome during the mRNA decay and quality-control pathways. The SKI complex catalyzes mRNA extraction from 80S ribosomal complexes in the 3'-5' direction and channels mRNA to the cytosolic exosome for degradation. SKI-mediated extraction of mRNA from stalled ribosomes allow binding of the Pelota-HBS1L complex and subsequent ribosome disassembly by ABCE1 for ribosome recycling. This chain is Superkiller complex protein 8 (Skic8), found in Rattus norvegicus (Rat).